The sequence spans 381 residues: Layilin (381 aa).

The signal sequence occupies residues 1–24 (MQPGAALQAMLLAVLLAKPRDSKG). The Extracellular segment spans residues 25–235 (RLLSASDLDP…ERREAALNLA (211 aa)). A C-type lectin domain is found at 45–185 (TRRPCYKVIY…CNMKNNFICK (141 aa)). Cystine bridges form between C71–C184 and C150–C176. The N-linked (GlcNAc...) asparagine glycan is linked to N117. A helical transmembrane segment spans residues 236 to 256 (YILIPSIPLFLLLVVTSAVCW). The Cytoplasmic portion of the chain corresponds to 257–381 (VWICRRKREQ…SGWVENEIYY (125 aa)). Phosphoserine occurs at positions 286 and 299. The interaction with NF2 stretch occupies residues 330–374 (DYENIAVNPSESGFVTLASMESGFVTNDIYEFSPDRMGRSKESGW). An interaction with TLN1 region spans residues 337–381 (NPSESGFVTLASMESGFVTNDIYEFSPDRMGRSKESGWVENEIYY). Tandem repeats lie at residues 340 to 344 (ESGFV), 350 to 354 (ESGFV), 356 to 359 (NDIY), 371 to 375 (ESGWV), and 377 to 380 (NEIY). Residues 340 to 375 (ESGFVTLASMESGFVTNDIYEFSPDRMGRSKESGWV) form a 3 X 5 AA repeats of E-S-G-X-V region. A 2 X 4 AA repeats of N-X-I-Y region spans residues 356–380 (NDIYEFSPDRMGRSKESGWVENEIY).

Interacts with TLN1. Interacts with NF2 and RDX.

Its subcellular location is the membrane. In terms of biological role, receptor for hyaluronate. The protein is Layilin (Layn) of Mus musculus (Mouse).